The sequence spans 340 residues: tRNA-cytidine(32) 2-sulfurtransferase (340 aa).

Residues 74–79 carry the PP-loop motif motif; it reads SGGKDS. [4Fe-4S] cluster-binding residues include C149, C152, and C240.

The protein belongs to the TtcA family. As to quaternary structure, homodimer. The cofactor is Mg(2+). [4Fe-4S] cluster serves as cofactor.

It localises to the cytoplasm. The enzyme catalyses cytidine(32) in tRNA + S-sulfanyl-L-cysteinyl-[cysteine desulfurase] + AH2 + ATP = 2-thiocytidine(32) in tRNA + L-cysteinyl-[cysteine desulfurase] + A + AMP + diphosphate + H(+). Its pathway is tRNA modification. Functionally, catalyzes the ATP-dependent 2-thiolation of cytidine in position 32 of tRNA, to form 2-thiocytidine (s(2)C32). The sulfur atoms are provided by the cysteine/cysteine desulfurase (IscS) system. The chain is tRNA-cytidine(32) 2-sulfurtransferase from Burkholderia ambifaria (strain MC40-6).